We begin with the raw amino-acid sequence, 165 residues long: NADPH-dependent 7-cyano-7-deazaguanine reductase (165 aa).

Cys56 acts as the Thioimide intermediate in catalysis. The active-site Proton donor is Asp63. Substrate-binding positions include 78–80 (VES) and 97–98 (HE).

Belongs to the GTP cyclohydrolase I family. QueF type 1 subfamily.

It is found in the cytoplasm. The enzyme catalyses 7-aminomethyl-7-carbaguanine + 2 NADP(+) = 7-cyano-7-deazaguanine + 2 NADPH + 3 H(+). It participates in tRNA modification; tRNA-queuosine biosynthesis. In terms of biological role, catalyzes the NADPH-dependent reduction of 7-cyano-7-deazaguanine (preQ0) to 7-aminomethyl-7-deazaguanine (preQ1). The polypeptide is NADPH-dependent 7-cyano-7-deazaguanine reductase (Bacillus mycoides (strain KBAB4) (Bacillus weihenstephanensis)).